Reading from the N-terminus, the 296-residue chain is Phosphatidylglycerol--prolipoprotein diacylglyceryl transferase (296 aa).

The next 3 helical transmembrane spans lie at 17–37 (LAVRWYGLMYLVGFILAIVVG), 59–79 (MMFYGVLGVVLGGRLGYVLFY), and 97–117 (GGMSFHGGFLGVTLAMALFAW). Position 142 (Arg142) interacts with a 1,2-diacyl-sn-glycero-3-phospho-(1'-sn-glycerol). The next 2 helical transmembrane spans lie at 230-250 (MGAISALFLIGYGAARFTVEF) and 265-285 (LSMGQWLSLPMIVAGVLMMIW).

This sequence belongs to the Lgt family.

The protein resides in the cell inner membrane. It carries out the reaction L-cysteinyl-[prolipoprotein] + a 1,2-diacyl-sn-glycero-3-phospho-(1'-sn-glycerol) = an S-1,2-diacyl-sn-glyceryl-L-cysteinyl-[prolipoprotein] + sn-glycerol 1-phosphate + H(+). Its pathway is protein modification; lipoprotein biosynthesis (diacylglyceryl transfer). Functionally, catalyzes the transfer of the diacylglyceryl group from phosphatidylglycerol to the sulfhydryl group of the N-terminal cysteine of a prolipoprotein, the first step in the formation of mature lipoproteins. This is Phosphatidylglycerol--prolipoprotein diacylglyceryl transferase from Burkholderia mallei (strain NCTC 10247).